Reading from the N-terminus, the 405-residue chain is 4-hydroxy-3-methylbut-2-en-1-yl diphosphate synthase (flavodoxin) (405 aa).

Cys-297, Cys-300, Cys-343, and Glu-350 together coordinate [4Fe-4S] cluster.

It belongs to the IspG family. Requires [4Fe-4S] cluster as cofactor.

The catalysed reaction is (2E)-4-hydroxy-3-methylbut-2-enyl diphosphate + oxidized [flavodoxin] + H2O + 2 H(+) = 2-C-methyl-D-erythritol 2,4-cyclic diphosphate + reduced [flavodoxin]. It functions in the pathway isoprenoid biosynthesis; isopentenyl diphosphate biosynthesis via DXP pathway; isopentenyl diphosphate from 1-deoxy-D-xylulose 5-phosphate: step 5/6. In terms of biological role, converts 2C-methyl-D-erythritol 2,4-cyclodiphosphate (ME-2,4cPP) into 1-hydroxy-2-methyl-2-(E)-butenyl 4-diphosphate. The sequence is that of 4-hydroxy-3-methylbut-2-en-1-yl diphosphate synthase (flavodoxin) from Francisella tularensis subsp. mediasiatica (strain FSC147).